Consider the following 306-residue polypeptide: Porphobilinogen deaminase (306 aa).

Cys-239 bears the S-(dipyrrolylmethanemethyl)cysteine mark.

It belongs to the HMBS family. In terms of assembly, monomer. The cofactor is dipyrromethane.

The enzyme catalyses 4 porphobilinogen + H2O = hydroxymethylbilane + 4 NH4(+). Its pathway is porphyrin-containing compound metabolism; protoporphyrin-IX biosynthesis; coproporphyrinogen-III from 5-aminolevulinate: step 2/4. Tetrapolymerization of the monopyrrole PBG into the hydroxymethylbilane pre-uroporphyrinogen in several discrete steps. This chain is Porphobilinogen deaminase, found in Helicobacter pylori (strain G27).